A 450-amino-acid polypeptide reads, in one-letter code: Probable glucoamylase (450 aa).

Positions 1–16 (MRTYWLFLLLGGVVSA) are cleaved as a signal peptide. Residues 17–28 (ESLLSPNKRSKE) constitute a propeptide that is removed on maturation. W147 is a binding site for substrate. Residue D203 is the Proton acceptor of the active site. E206 functions as the Proton donor in the catalytic mechanism. 2 N-linked (GlcNAc...) asparagine glycosylation sites follow: N383 and N409.

It belongs to the glycosyl hydrolase 15 family.

The catalysed reaction is Hydrolysis of terminal (1-&gt;4)-linked alpha-D-glucose residues successively from non-reducing ends of the chains with release of beta-D-glucose.. This Schizosaccharomyces pombe (strain 972 / ATCC 24843) (Fission yeast) protein is Probable glucoamylase (meu17).